Reading from the N-terminus, the 1222-residue chain is Chitin synthase 4 (1222 aa).

Disordered stretches follow at residues 1-101 (MSLP…ERNR) and 138-200 (TERT…KRIE). 2 stretches are compositionally biased toward polar residues: residues 11 to 24 (QAYNQRSVYRNSPS) and 42 to 77 (NQASHQRGKSGSSFAESIGINSNTESMPLSPTSPDG). Residues 182–196 (SGKIKRKSRRHSKPP) show a composition bias toward basic residues. 2 consecutive transmembrane segments (helical) span residues 205-225 (PPTFWNVYCAIVTFWAPGFIM) and 243-263 (MGLISIILIIMAIVGFLTFGF). N-linked (GlcNAc...) asparagine glycosylation is found at Asn378, Asn418, and Asn440. A helical membrane pass occupies residues 513 to 533 (ALILSVVGVRFFLAIIFQWFI). A disordered region spans residues 576-630 (TVYGSSDRSSKRASFLPTTSRFSSVGGPDIRSQGGRRMPTTMASQSTSNQLLTPN). Positions 616–630 (TMASQSTSNQLLTPN) are enriched in polar residues. 2 N-linked (GlcNAc...) asparagine glycosylation sites follow: Asn637 and Asn1030. 3 consecutive transmembrane segments (helical) span residues 1055–1075 (FIIFVELVGTLVLPAAIAFTF), 1089–1109 (IIPLVLLGLILGLPGLLVIIT), and 1113–1133 (WSYIVWMLIYLLALPIWNFVL). The disordered stretch occupies residues 1202–1222 (GGQTWTSPPGHQYNEEYYSDA).

This sequence belongs to the chitin synthase family. Class IV subfamily.

Its subcellular location is the cell membrane. The enzyme catalyses [(1-&gt;4)-N-acetyl-beta-D-glucosaminyl](n) + UDP-N-acetyl-alpha-D-glucosamine = [(1-&gt;4)-N-acetyl-beta-D-glucosaminyl](n+1) + UDP + H(+). Its function is as follows. Polymerizes chitin, a structural polymer of the cell wall and septum, by transferring the sugar moiety of UDP-GlcNAc to the non-reducing end of the growing chitin polymer. Shows additive effects in septum formation with CHS1, CHS2, CHS3A, CHS5, CHS6 and CHS7. Regulates conidiation. Involved in virulence and mediates mycotoxin deoxinivalenol (DON) biosynthesis via the regulation of the expression of TRI4, TRI5 and TRI6. This is Chitin synthase 4 from Gibberella zeae (strain ATCC MYA-4620 / CBS 123657 / FGSC 9075 / NRRL 31084 / PH-1) (Wheat head blight fungus).